Consider the following 120-residue polypeptide: UPF0231 protein KPK_4613 (120 aa).

It belongs to the UPF0231 family.

In Klebsiella pneumoniae (strain 342), this protein is UPF0231 protein KPK_4613.